Consider the following 390-residue polypeptide: Bibenzyl synthase (390 aa).

Residue C164 is part of the active site.

This sequence belongs to the thiolase-like superfamily. Chalcone/stilbene synthases family.

The catalysed reaction is 3-(3-hydroxyphenyl)-propanoyl-CoA + 3 malonyl-CoA + 3 H(+) = 3,3',5-trihydroxybibenzyl + 4 CO2 + 4 CoA. This Phalaenopsis sp. (Moth orchid) protein is Bibenzyl synthase (BIBSY212).